We begin with the raw amino-acid sequence, 123 residues long: Large ribosomal subunit protein bL12 (123 aa).

It belongs to the bacterial ribosomal protein bL12 family. As to quaternary structure, homodimer. Part of the ribosomal stalk of the 50S ribosomal subunit. Forms a multimeric L10(L12)X complex, where L10 forms an elongated spine to which 2 to 4 L12 dimers bind in a sequential fashion. Binds GTP-bound translation factors.

Functionally, forms part of the ribosomal stalk which helps the ribosome interact with GTP-bound translation factors. Is thus essential for accurate translation. In Borrelia duttonii (strain Ly), this protein is Large ribosomal subunit protein bL12.